Consider the following 613-residue polypeptide: Putative two-component response regulator ARR21 (613 aa).

The Response regulatory domain maps to 17–131 (NVMVVDDDHV…DLTKIYQFAL (115 aa)). Asp68 is subject to 4-aspartylphosphate. The segment covering 178–195 (KSDSRTVNSTNGSCVSTD) has biased composition (polar residues). Residues 178–223 (KSDSRTVNSTNGSCVSTDGSRKNRKRKPNGGPSDDGESMSQPAKKK) form a disordered region. Residues 221–224 (KKKK) carry the Nuclear localization signal motif. The myb-like GARP DNA-binding region spans 224-274 (KIQWTDSLHDLFLQAIRHIGLDKAVPKKILAFMSVPYLTRENVASHLQKYR).

This sequence belongs to the ARR family. Type-B subfamily. As to quaternary structure, binds the target DNA as a monomer. Two-component system major event consists of a His-to-Asp phosphorelay between a sensor histidine kinase (HK) and a response regulator (RR). In plants, the His-to-Asp phosphorelay involves an additional intermediate named Histidine-containing phosphotransfer protein (HPt). This multistep phosphorelay consists of a His-Asp-His-Asp sequential transfer of a phosphate group between first a His and an Asp of the HK protein, followed by the transfer to a conserved His of the HPt protein and finally the transfer to an Asp in the receiver domain of the RR protein. As to expression, mainly expressed in siliques. Also found in germinating seedlings, stems, flowers and roots, but not in rosette leaves.

It is found in the nucleus. In terms of biological role, putative transcriptional activator that binds specifically to the DNA sequence 5'-[AG]GATT-3'. Functions as a response regulator involved in His-to-Asp phosphorelay signal transduction system. Phosphorylation of the Asp residue in the receiver domain activates the ability of the protein to promote the transcription of target genes. Could directly activate some type-A response regulators in response to cytokinins. In Arabidopsis thaliana (Mouse-ear cress), this protein is Putative two-component response regulator ARR21 (ARR21).